Reading from the N-terminus, the 413-residue chain is NPL4-like protein 1 (413 aa).

Ser-104 bears the Phosphoserine mark. The 142-residue stretch at 131–272 (SVSFDRDCAN…ADVHFEPFQM (142 aa)) folds into the MPN domain.

It belongs to the NPL4 family.

It functions in the pathway protein degradation; proteasomal ubiquitin-dependent pathway. May be part of a complex that binds ubiquitinated proteins and that is necessary for the export of misfolded proteins from the ER to the cytoplasm, where they are degraded by the proteasome. The chain is NPL4-like protein 1 from Arabidopsis thaliana (Mouse-ear cress).